The following is a 350-amino-acid chain: Biotin synthase (350 aa).

One can recognise a Radical SAM core domain in the interval Asn-38–Glu-256. [4Fe-4S] cluster contacts are provided by Cys-53, Cys-57, and Cys-60. Residues Cys-97, Cys-128, Cys-188, and Arg-260 each contribute to the [2Fe-2S] cluster site.

The protein belongs to the radical SAM superfamily. Biotin synthase family. Homodimer. Requires [4Fe-4S] cluster as cofactor. The cofactor is [2Fe-2S] cluster.

It catalyses the reaction (4R,5S)-dethiobiotin + (sulfur carrier)-SH + 2 reduced [2Fe-2S]-[ferredoxin] + 2 S-adenosyl-L-methionine = (sulfur carrier)-H + biotin + 2 5'-deoxyadenosine + 2 L-methionine + 2 oxidized [2Fe-2S]-[ferredoxin]. Its pathway is cofactor biosynthesis; biotin biosynthesis; biotin from 7,8-diaminononanoate: step 2/2. In terms of biological role, catalyzes the conversion of dethiobiotin (DTB) to biotin by the insertion of a sulfur atom into dethiobiotin via a radical-based mechanism. This chain is Biotin synthase, found in Aliivibrio fischeri (strain ATCC 700601 / ES114) (Vibrio fischeri).